The sequence spans 461 residues: Gustatory and pheromone receptor 32a (461 aa).

The Cytoplasmic segment spans residues 1–100; sequence MSPNTWVIEM…YSFFVRGVVH (100 aa). The helical transmembrane segment at 101–121 threads the bilayer; the sequence is ALTIFNVYSLFTPISAQLFFS. Residues 122–127 lie on the Extracellular side of the membrane; the sequence is YRETDN. A helical membrane pass occupies residues 128 to 148; sequence VNQWIELLLCILTYTLTVFVC. Over 149-180 the chain is Cytoplasmic; that stretch reads AHNTTSMLRIMNEILQLDEEVRRQFGANLSQN. A helical transmembrane segment spans residues 181-201; it reads FGFLVKFLVGITACQAYIIVL. At 202 to 214 the chain is on the extracellular side; it reads KIYAVQGEITPTS. A helical transmembrane segment spans residues 215–235; it reads YILLAFYGIQNGLTATYIVFA. Topologically, residues 236 to 317 are cytoplasmic; that stretch reads SALLRIVYIR…YKGINDCCNL (82 aa). Residues 318–338 form a helical membrane-spanning segment; sequence ILVSFLGYSFYTVTTNCYNLF. The Extracellular segment spans residues 339-348; the sequence is VQITGKGMVS. The chain crosses the membrane as a helical span at residues 349-369; the sequence is PNILQWCFAWLCLHVSLLALL. The Cytoplasmic portion of the chain corresponds to 370–414; sequence SRSCGLTTTEANATSQILARVYAKSKEYQNIIDKFLTKSIKQEVQ. A helical membrane pass occupies residues 415–435; that stretch reads FTAYGFFAIDNSTLFKIFSAV. Residues 436 to 461 are Extracellular-facing; the sequence is TTYLVILIQFKQLEDSKVEDPVPEQT.

The protein belongs to the insect chemoreceptor superfamily. Gustatory receptor (GR) family. Gr21a subfamily. As to expression, expressed in the adult labellar chemosensory neurons. Expressed in tarsal neurons for male-male courtship suppression. In larvae, is expressed in neurons of the terminal external chemosensory organ, and the dorsal and posterior external chemosensory organs.

Its subcellular location is the cell membrane. Its function is as follows. Gustatory receptor which mediates acceptance or avoidance behavior, depending on its substrates. Required for the response to N,N-Diethyl-meta-toluamide (DEET), the most widely used insect repellent worldwide. Functions as a pheromone receptor for a male inhibitory pheromone and promotes male-male aggression and suppresses male-male courtship. Also promotes preferentially virgin females courting over mated females. The chain is Gustatory and pheromone receptor 32a (Gr32a) from Drosophila melanogaster (Fruit fly).